The chain runs to 625 residues: Thioredoxin domain-containing protein 6 (625 aa).

The NDK stretch occupies residues 158–302 (KSYTVAIIKP…FFFPNFKISN (145 aa)). The interval 594–625 (GETPETSASDISRNAAAQGDDPEQDESKEMEE) is disordered. Positions 613–625 (DDPEQDESKEMEE) are enriched in acidic residues.

Belongs to the NDK family. Monomer and homodimer.

It is found in the cytoplasm. It localises to the cytoskeleton. Its subcellular location is the cilium axoneme. The protein localises to the dynein axonemal particle. In terms of biological role, may be a regulator of microtubule physiology. The sequence is that of Thioredoxin domain-containing protein 6 from Xenopus laevis (African clawed frog).